The sequence spans 629 residues: tRNA uridine 5-carboxymethylaminomethyl modification enzyme MnmG (629 aa).

13–18 (GGGHAG) is a binding site for FAD. 273–287 (GPRYCPSIEDKVMRF) provides a ligand contact to NAD(+).

This sequence belongs to the MnmG family. In terms of assembly, homodimer. Heterotetramer of two MnmE and two MnmG subunits. Requires FAD as cofactor.

It is found in the cytoplasm. NAD-binding protein involved in the addition of a carboxymethylaminomethyl (cmnm) group at the wobble position (U34) of certain tRNAs, forming tRNA-cmnm(5)s(2)U34. This is tRNA uridine 5-carboxymethylaminomethyl modification enzyme MnmG from Photorhabdus laumondii subsp. laumondii (strain DSM 15139 / CIP 105565 / TT01) (Photorhabdus luminescens subsp. laumondii).